The following is a 300-amino-acid chain: Transcription initiation factor IIB (300 aa).

A TFIIB-type zinc finger spans residues 2-34; the sequence is NKQKVCPACESAELIYDPERGEIVCAKCGYVIE. 4 residues coordinate Zn(2+): Cys7, Cys10, Cys26, and Cys29. 2 consecutive repeat copies span residues 114 to 197 and 210 to 291.

Belongs to the TFIIB family.

Functionally, stabilizes TBP binding to an archaeal box-A promoter. Also responsible for recruiting RNA polymerase II to the pre-initiation complex (DNA-TBP-TFIIB). In Pyrococcus furiosus (strain ATCC 43587 / DSM 3638 / JCM 8422 / Vc1), this protein is Transcription initiation factor IIB.